The sequence spans 594 residues: Choline dehydrogenase, mitochondrial (594 aa).

The transit peptide at 1–29 (MWCLLRGLGRPGALARGALGQQQSLGARA) directs the protein to the mitochondrion. 42–71 (SYVVVGAGSAGCVLAGRLTEDPAERVLLLE) is an FAD binding site. At Lys436 the chain carries N6-succinyllysine. N6-acetyllysine; alternate is present on residues Lys484 and Lys496. An N6-succinyllysine; alternate mark is found at Lys484 and Lys496. His511 (proton acceptor) is an active-site residue. Lys580 carries the post-translational modification N6-acetyllysine.

This sequence belongs to the GMC oxidoreductase family. It depends on FAD as a cofactor.

It is found in the mitochondrion inner membrane. The enzyme catalyses choline + A = betaine aldehyde + AH2. Its pathway is amine and polyamine biosynthesis; betaine biosynthesis via choline pathway; betaine aldehyde from choline (cytochrome c reductase route): step 1/1. This is Choline dehydrogenase, mitochondrial (CHDH) from Homo sapiens (Human).